The chain runs to 204 residues: 3-isopropylmalate dehydratase small subunit (204 aa).

This sequence belongs to the LeuD family. LeuD type 1 subfamily. As to quaternary structure, heterodimer of LeuC and LeuD.

The catalysed reaction is (2R,3S)-3-isopropylmalate = (2S)-2-isopropylmalate. It functions in the pathway amino-acid biosynthesis; L-leucine biosynthesis; L-leucine from 3-methyl-2-oxobutanoate: step 2/4. Catalyzes the isomerization between 2-isopropylmalate and 3-isopropylmalate, via the formation of 2-isopropylmaleate. The polypeptide is 3-isopropylmalate dehydratase small subunit (Roseiflexus sp. (strain RS-1)).